The chain runs to 356 residues: NADH-quinone oxidoreductase subunit H (356 aa).

A run of 8 helical transmembrane segments spans residues 4-24 (ALIL…LTGV), 79-99 (LLAP…IPFG), 127-147 (GVLY…IAGW), 166-186 (ISYE…TGSL), 198-218 (MWNI…TAMF), 251-271 (FFLA…LLFF), 289-309 (FIGL…FIWV), and 329-349 (MIPW…YWKE).

Belongs to the complex I subunit 1 family. In terms of assembly, NDH-1 is composed of 14 different subunits. Subunits NuoA, H, J, K, L, M, N constitute the membrane sector of the complex.

It is found in the cell inner membrane. It catalyses the reaction a quinone + NADH + 5 H(+)(in) = a quinol + NAD(+) + 4 H(+)(out). Its function is as follows. NDH-1 shuttles electrons from NADH, via FMN and iron-sulfur (Fe-S) centers, to quinones in the respiratory chain. The immediate electron acceptor for the enzyme in this species is believed to be ubiquinone. Couples the redox reaction to proton translocation (for every two electrons transferred, four hydrogen ions are translocated across the cytoplasmic membrane), and thus conserves the redox energy in a proton gradient. This subunit may bind ubiquinone. The protein is NADH-quinone oxidoreductase subunit H of Leptospira biflexa serovar Patoc (strain Patoc 1 / ATCC 23582 / Paris).